Here is a 289-residue protein sequence, read N- to C-terminus: Probable ABC transporter permease protein BRA0749/BS1330_II0742 (289 aa).

A run of 6 helical transmembrane segments spans residues 9 to 29 (FLIL…VVHL), 70 to 90 (VWTV…AIIL), 99 to 119 (VARV…AIVW), 144 to 166 (IQWL…LVTV), 213 to 233 (IAIV…WVMT), and 260 to 280 (EASA…VIYI). The region spanning 65 to 279 (LWRTAVWTVA…AILLVFTVIY (215 aa)) is the ABC transmembrane type-1 domain.

The protein belongs to the binding-protein-dependent transport system permease family. As to quaternary structure, the complex is composed of two ATP-binding proteins (BRA0745), two transmembrane proteins (BRA0749) and a solute-binding protein (BRA0748).

The protein localises to the cell inner membrane. In terms of biological role, probably part of an ABC transporter complex. Probably responsible for the translocation of the substrate across the membrane. This is Probable ABC transporter permease protein BRA0749/BS1330_II0742 from Brucella suis biovar 1 (strain 1330).